The sequence spans 179 residues: Large ribosomal subunit protein uL5 (179 aa).

This sequence belongs to the universal ribosomal protein uL5 family. Part of the 50S ribosomal subunit; part of the 5S rRNA/L5/L18/L25 subcomplex. Contacts the 5S rRNA and the P site tRNA. Forms a bridge to the 30S subunit in the 70S ribosome.

In terms of biological role, this is one of the proteins that bind and probably mediate the attachment of the 5S RNA into the large ribosomal subunit, where it forms part of the central protuberance. In the 70S ribosome it contacts protein S13 of the 30S subunit (bridge B1b), connecting the 2 subunits; this bridge is implicated in subunit movement. Contacts the P site tRNA; the 5S rRNA and some of its associated proteins might help stabilize positioning of ribosome-bound tRNAs. The polypeptide is Large ribosomal subunit protein uL5 (Desulfotalea psychrophila (strain LSv54 / DSM 12343)).